Here is a 158-residue protein sequence, read N- to C-terminus: uncharacterized protein (158 aa).

Residues Met1 to Ser30 form the signal peptide.

This is an uncharacterized protein from Streptococcus pneumoniae serotype 2 (strain D39 / NCTC 7466).